We begin with the raw amino-acid sequence, 362 residues long: N-acylethanolamine-hydrolyzing acid amidase (362 aa).

The signal sequence occupies residues 1–33 (MGTLATRAACHGAHLALALLLLLSLSGPWLSAV). Residues Asn-42 and Asn-112 are each glycosylated (N-linked (GlcNAc...) asparagine). Residue Cys-131 is the Nucleophile of the active site. Residues Asn-314 and Asn-338 are each glycosylated (N-linked (GlcNAc...) asparagine).

This sequence belongs to the acid ceramidase family. As to quaternary structure, heterodimer of an alpha and a beta subunit, produced by autocatalytic cleavage. N-glycosylated. Tunicamycin treatment causes a reduction in specific activity against N-palmitoylethanolamine. In terms of processing, autoproteolytic cleavage at pH 4.5 gives rise to the alpha and beta subunit. Cleavage gives rise to a conformation change that activates the enzyme. The same catalytic Cys residue mediates the autoproteolytic cleavage and subsequent hydrolysis of lipid substrates.

It is found in the lysosome. Its subcellular location is the membrane. The enzyme catalyses N-hexadecanoylethanolamine + H2O = ethanolamine + hexadecanoate. The catalysed reaction is an N-(long-chain fatty acyl)ethanolamine + H2O = a long-chain fatty acid + ethanolamine. It catalyses the reaction N-dodecanoylethanolamine + H2O = dodecanoate + ethanolamine. It carries out the reaction N-tetradecanoylethanolamine + H2O = tetradecanoate + ethanolamine. The enzyme catalyses an N-acylsphing-4-enine + H2O = sphing-4-enine + a fatty acid. The catalysed reaction is N-hexadecanoylsphing-4-enine + H2O = sphing-4-enine + hexadecanoate. It catalyses the reaction N-dodecanoylsphing-4-enine + H2O = dodecanoate + sphing-4-enine. It functions in the pathway lipid metabolism; fatty acid metabolism. In terms of biological role, degrades bioactive fatty acid amides to their corresponding acids, with the following preference: N-palmitoylethanolamine &gt; N-myristoylethanolamine &gt; N-stearoylethanolamine &gt; N-oleoylethanolamine &gt; N-linoleoylethanolamine &gt; N-arachidonoylethanolamine. This is N-acylethanolamine-hydrolyzing acid amidase from Mus musculus (Mouse).